We begin with the raw amino-acid sequence, 140 residues long: ATP synthase epsilon chain (140 aa).

The protein belongs to the ATPase epsilon chain family. F-type ATPases have 2 components, CF(1) - the catalytic core - and CF(0) - the membrane proton channel. CF(1) has five subunits: alpha(3), beta(3), gamma(1), delta(1), epsilon(1). CF(0) has three main subunits: a, b and c.

The protein localises to the cell inner membrane. Functionally, produces ATP from ADP in the presence of a proton gradient across the membrane. This chain is ATP synthase epsilon chain, found in Nitrosomonas europaea (strain ATCC 19718 / CIP 103999 / KCTC 2705 / NBRC 14298).